A 515-amino-acid chain; its full sequence is Lysine--tRNA ligase (515 aa).

Glutamate 422 and glutamate 429 together coordinate Mg(2+).

It belongs to the class-II aminoacyl-tRNA synthetase family. In terms of assembly, homodimer. It depends on Mg(2+) as a cofactor.

The protein localises to the cytoplasm. It catalyses the reaction tRNA(Lys) + L-lysine + ATP = L-lysyl-tRNA(Lys) + AMP + diphosphate. This Clostridium acetobutylicum (strain ATCC 824 / DSM 792 / JCM 1419 / IAM 19013 / LMG 5710 / NBRC 13948 / NRRL B-527 / VKM B-1787 / 2291 / W) protein is Lysine--tRNA ligase.